The following is a 577-amino-acid chain: 2-succinyl-5-enolpyruvyl-6-hydroxy-3-cyclohexene-1-carboxylate synthase (577 aa).

Belongs to the TPP enzyme family. MenD subfamily. Homodimer. Mg(2+) serves as cofactor. Requires Mn(2+) as cofactor. The cofactor is thiamine diphosphate.

The catalysed reaction is isochorismate + 2-oxoglutarate + H(+) = 5-enolpyruvoyl-6-hydroxy-2-succinyl-cyclohex-3-ene-1-carboxylate + CO2. It participates in quinol/quinone metabolism; 1,4-dihydroxy-2-naphthoate biosynthesis; 1,4-dihydroxy-2-naphthoate from chorismate: step 2/7. The protein operates within cofactor biosynthesis; phylloquinone biosynthesis. Functionally, catalyzes the thiamine diphosphate-dependent decarboxylation of 2-oxoglutarate and the subsequent addition of the resulting succinic semialdehyde-thiamine pyrophosphate anion to isochorismate to yield 2-succinyl-5-enolpyruvyl-6-hydroxy-3-cyclohexene-1-carboxylate (SEPHCHC). This chain is 2-succinyl-5-enolpyruvyl-6-hydroxy-3-cyclohexene-1-carboxylate synthase, found in Synechococcus sp. (strain CC9311).